Consider the following 187-residue polypeptide: NADH-quinone oxidoreductase subunit B (187 aa).

Residues Cys51, Cys52, Cys117, and Cys149 each contribute to the [4Fe-4S] cluster site.

Belongs to the complex I 20 kDa subunit family. In terms of assembly, NDH-1 is composed of 14 different subunits. Subunits NuoB, C, D, E, F, and G constitute the peripheral sector of the complex. It depends on [4Fe-4S] cluster as a cofactor.

The protein resides in the cell inner membrane. The catalysed reaction is a quinone + NADH + 5 H(+)(in) = a quinol + NAD(+) + 4 H(+)(out). Functionally, NDH-1 shuttles electrons from NADH, via FMN and iron-sulfur (Fe-S) centers, to quinones in the respiratory chain. The immediate electron acceptor for the enzyme in this species is believed to be ubiquinone. Couples the redox reaction to proton translocation (for every two electrons transferred, four hydrogen ions are translocated across the cytoplasmic membrane), and thus conserves the redox energy in a proton gradient. The polypeptide is NADH-quinone oxidoreductase subunit B (Nitratidesulfovibrio vulgaris (strain DSM 19637 / Miyazaki F) (Desulfovibrio vulgaris)).